The primary structure comprises 1195 residues: Zinc finger and BTB domain-containing protein 38 (1195 aa).

Positions 33–100 constitute a BTB domain; sequence CDVTIIVEDT…IYSSTVVVKR (68 aa). A Glycyl lysine isopeptide (Lys-Gly) (interchain with G-Cter in SUMO2) cross-link involves residue K43. A Phosphoserine modification is found at S130. Residues K145, K148, K151, and K259 each participate in a glycyl lysine isopeptide (Lys-Gly) (interchain with G-Cter in SUMO2) cross-link. The segment at 264–334 is disordered; it reads RKPKTFSIPQ…QSSDVPGPPA (71 aa). Positions 270-280 are enriched in polar residues; the sequence is SIPQDSDSATE. An interaction with CBFA2T3 region spans residues 300 to 523; it reads PAAVLTRSKS…RRYQCIFCLE (224 aa). The residue at position 309 (S309) is a Phosphoserine. The segment covering 314–323 has biased composition (basic and acidic residues); it reads GDVHFSREDE. Residues 342–364 form a C2H2-type 1 zinc finger; sequence YNCSCCSKAFDSSTLLSAHMQLH. Residues 371–395 form a C2H2-type 2; degenerate zinc finger; that stretch reads LVCKYCNKQFTTLNRLDRHEQICMR. C2H2-type zinc fingers lie at residues 460–482, 488–510, and 516–539; these read YSCVVCKRSYVTLSSLRRHANVH, YPCHYCNKVFALAEYRTRHEIWH, and YQCIFCLETFMTYYILKNHQKSFH. Glycyl lysine isopeptide (Lys-Gly) (interchain with G-Cter in SUMO2) cross-links involve residues K550, K557, K754, K758, K763, K804, K814, K821, K842, K850, and K857. The interval 745 to 804 is disordered; it reads SDPAVSQSLKDDSKPEPDKVGRFASRPKSIKEKKKTTSHTRGEIPEESNYVADPGGSLSK. Basic and acidic residues predominate over residues 753 to 765; it reads LKDDSKPEPDKVG. Disordered regions lie at residues 871–891 and 903–922; these read QEEPLPQGNDPEPSGDSPLGL and FDDASDQDSTDKPWRPYYNY. Glycyl lysine isopeptide (Lys-Gly) (interchain with G-Cter in SUMO2) cross-links involve residues K923, K964, K969, K977, K981, K991, K1017, and K1026. C2H2-type zinc fingers lie at residues 1010–1032, 1038–1060, 1066–1088, 1094–1116, and 1125–1147; these read YACELCAKQFQSPSTLKMHMRCH, YQCKTCGRCFSVQGNLQKHERIH, FVCQYCNKAFTLNETLKIHERIH, YHCQFCFQRFLYLSTKRNHEQRH, and YACFQCPKICKTAAALGMHQKKH. Glycyl lysine isopeptide (Lys-Gly) (interchain with G-Cter in SUMO2) cross-links involve residues K1109, K1132, K1135, K1150, and K1183.

Interacts with CBFA2T3. Interacts with ZBTB4. Interacts with RBBP6. Post-translationally, ubiquitinated by RBBP6; leading to its degradation by the proteasome.

It is found in the nucleus. The protein localises to the chromosome. Transcriptional regulator with bimodal DNA-binding specificity. Binds with a higher affinity to methylated CpG dinucleotides in the consensus sequence 5'-CGCG-3' but can also bind to E-box elements (5'-CACGTG-3'). Can also bind specifically to a single methyl-CpG pair. Represses transcription in a methyl-CpG-dependent manner. Plays an important role in regulating DNA replication and common fragile sites (CFS) stability in a RBBP6- and MCM10-dependent manner; represses expression of MCM10 which plays an important role in DNA-replication. Acts as a transcriptional activator. May be involved in the differentiation and/or survival of late postmitotic neurons. The protein is Zinc finger and BTB domain-containing protein 38 of Homo sapiens (Human).